Reading from the N-terminus, the 560-residue chain is Dihydroxy-acid dehydratase (560 aa).

Cys52 contributes to the [2Fe-2S] cluster binding site. Asp84 contributes to the Mg(2+) binding site. Residue Cys125 participates in [2Fe-2S] cluster binding. Residues Asp126 and Lys127 each coordinate Mg(2+). Lys127 bears the N6-carboxylysine mark. A [2Fe-2S] cluster-binding site is contributed by Cys197. Glu448 provides a ligand contact to Mg(2+). Catalysis depends on Ser474, which acts as the Proton acceptor.

It belongs to the IlvD/Edd family. In terms of assembly, homodimer. [2Fe-2S] cluster is required as a cofactor. Requires Mg(2+) as cofactor.

It carries out the reaction (2R)-2,3-dihydroxy-3-methylbutanoate = 3-methyl-2-oxobutanoate + H2O. The catalysed reaction is (2R,3R)-2,3-dihydroxy-3-methylpentanoate = (S)-3-methyl-2-oxopentanoate + H2O. It participates in amino-acid biosynthesis; L-isoleucine biosynthesis; L-isoleucine from 2-oxobutanoate: step 3/4. It functions in the pathway amino-acid biosynthesis; L-valine biosynthesis; L-valine from pyruvate: step 3/4. Functionally, functions in the biosynthesis of branched-chain amino acids. Catalyzes the dehydration of (2R,3R)-2,3-dihydroxy-3-methylpentanoate (2,3-dihydroxy-3-methylvalerate) into 2-oxo-3-methylpentanoate (2-oxo-3-methylvalerate) and of (2R)-2,3-dihydroxy-3-methylbutanoate (2,3-dihydroxyisovalerate) into 2-oxo-3-methylbutanoate (2-oxoisovalerate), the penultimate precursor to L-isoleucine and L-valine, respectively. The chain is Dihydroxy-acid dehydratase from Francisella tularensis subsp. novicida (strain U112).